We begin with the raw amino-acid sequence, 345 residues long: Phosphoribosylformylglycinamidine cyclo-ligase (345 aa).

Belongs to the AIR synthase family.

It localises to the cytoplasm. It catalyses the reaction 2-formamido-N(1)-(5-O-phospho-beta-D-ribosyl)acetamidine + ATP = 5-amino-1-(5-phospho-beta-D-ribosyl)imidazole + ADP + phosphate + H(+). Its pathway is purine metabolism; IMP biosynthesis via de novo pathway; 5-amino-1-(5-phospho-D-ribosyl)imidazole from N(2)-formyl-N(1)-(5-phospho-D-ribosyl)glycinamide: step 2/2. The chain is Phosphoribosylformylglycinamidine cyclo-ligase from Pseudoalteromonas atlantica (strain T6c / ATCC BAA-1087).